Reading from the N-terminus, the 66-residue chain is Photosystem II reaction center protein J (66 aa).

The helical transmembrane segment at 36-56 (LWLVATAGGIAVIFVLGIFFY) threads the bilayer.

This sequence belongs to the PsbJ family. In terms of assembly, PSII is composed of 1 copy each of membrane proteins PsbA, PsbB, PsbC, PsbD, PsbE, PsbF, PsbH, PsbI, PsbJ, PsbK, PsbL, PsbM, PsbT, PsbX, PsbY, Psb30/Ycf12, peripheral proteins PsbO, CyanoQ (PsbQ), PsbU, PsbV and a large number of cofactors. It forms dimeric complexes.

It is found in the cellular thylakoid membrane. Functionally, one of the components of the core complex of photosystem II (PSII). PSII is a light-driven water:plastoquinone oxidoreductase that uses light energy to abstract electrons from H(2)O, generating O(2) and a proton gradient subsequently used for ATP formation. It consists of a core antenna complex that captures photons, and an electron transfer chain that converts photonic excitation into a charge separation. This Prochlorococcus marinus (strain MIT 9215) protein is Photosystem II reaction center protein J.